Here is a 206-residue protein sequence, read N- to C-terminus: Glycerol-3-phosphate acyltransferase (206 aa).

5 consecutive transmembrane segments (helical) span residues 3-23, 51-71, 83-103, 113-133, and 162-182; these read LGWL…SYII, VGPA…AVVV, FAAA…YYGF, IGVL…IAIG, and WFGY…LSMW.

Belongs to the PlsY family. In terms of assembly, probably interacts with PlsX.

It localises to the cell membrane. The catalysed reaction is an acyl phosphate + sn-glycerol 3-phosphate = a 1-acyl-sn-glycero-3-phosphate + phosphate. The protein operates within lipid metabolism; phospholipid metabolism. Its function is as follows. Catalyzes the transfer of an acyl group from acyl-phosphate (acyl-PO(4)) to glycerol-3-phosphate (G3P) to form lysophosphatidic acid (LPA). This enzyme utilizes acyl-phosphate as fatty acyl donor, but not acyl-CoA or acyl-ACP. This chain is Glycerol-3-phosphate acyltransferase, found in Halalkalibacterium halodurans (strain ATCC BAA-125 / DSM 18197 / FERM 7344 / JCM 9153 / C-125) (Bacillus halodurans).